The following is a 281-amino-acid chain: Splicing regulator RBM11 (281 aa).

One can recognise an RRM domain in the interval 10–87 (RTVFVGNLEA…RPINVQYRFG (78 aa)). Residues 184–281 (PSSYKWTHQQ…FRKSKKKKRY (98 aa)) form a disordered region. Polar residues-rich tracts occupy residues 187–217 (YKWTHQQPSDSDLYQMTAPLPNSASVSSSLN) and 229–242 (YKWTHQQPSDSDLY). Positions 245–280 (NKRKRQKQTSDSDSSTDNNRGNECSQKFRKSKKKKR) match the Bipartite nuclear localization signal motif. Residues 271 to 281 (KFRKSKKKKRY) show a composition bias toward basic residues.

As to quaternary structure, homodimer. Expressed in brain, hippocampus, prefrontal cortex, cerebellum, spinal cord, testis, mammary gland, spleen and kidney. Also expressed in fetal brain.

The protein resides in the nucleus. It localises to the nucleoplasm. The protein localises to the nucleus speckle. Tissue-specific splicing factor with potential implication in the regulation of alternative splicing during neuron and germ cell differentiation. Antagonizes SRSF1-mediated BCL-X splicing. May affect the choice of alternative 5' splice sites by binding to specific sequences in exons and antagonizing the SR protein SRSF1. The chain is Splicing regulator RBM11 from Homo sapiens (Human).